Consider the following 233-residue polypeptide: 2-C-methyl-D-erythritol 4-phosphate cytidylyltransferase (233 aa).

Belongs to the IspD/TarI cytidylyltransferase family. IspD subfamily.

The enzyme catalyses 2-C-methyl-D-erythritol 4-phosphate + CTP + H(+) = 4-CDP-2-C-methyl-D-erythritol + diphosphate. It participates in isoprenoid biosynthesis; isopentenyl diphosphate biosynthesis via DXP pathway; isopentenyl diphosphate from 1-deoxy-D-xylulose 5-phosphate: step 2/6. Functionally, catalyzes the formation of 4-diphosphocytidyl-2-C-methyl-D-erythritol from CTP and 2-C-methyl-D-erythritol 4-phosphate (MEP). This is 2-C-methyl-D-erythritol 4-phosphate cytidylyltransferase from Thiobacillus denitrificans (strain ATCC 25259 / T1).